Consider the following 226-residue polypeptide: Urease accessory protein UreF (226 aa).

This sequence belongs to the UreF family. As to quaternary structure, ureD, UreF and UreG form a complex that acts as a GTP-hydrolysis-dependent molecular chaperone, activating the urease apoprotein by helping to assemble the nickel containing metallocenter of UreC. The UreE protein probably delivers the nickel.

The protein localises to the cytoplasm. Required for maturation of urease via the functional incorporation of the urease nickel metallocenter. The chain is Urease accessory protein UreF from Paraburkholderia phymatum (strain DSM 17167 / CIP 108236 / LMG 21445 / STM815) (Burkholderia phymatum).